We begin with the raw amino-acid sequence, 706 residues long: Fatty acid oxidation complex subunit alpha (706 aa).

Residues 1–188 (MEKTFNLTRR…KMGLVNDVVP (188 aa)) form an enoyl-CoA hydratase region. A 3-hydroxyacyl-CoA dehydrogenase region spans residues 308–706 (RKVKKAVILG…TMAQENAHFF (399 aa)).

This sequence in the N-terminal section; belongs to the enoyl-CoA hydratase/isomerase family. In the central section; belongs to the 3-hydroxyacyl-CoA dehydrogenase family. Heterotetramer of two alpha chains (FadJ) and two beta chains (FadI).

The protein resides in the cytoplasm. It catalyses the reaction a (3S)-3-hydroxyacyl-CoA = a (2E)-enoyl-CoA + H2O. The catalysed reaction is a 4-saturated-(3S)-3-hydroxyacyl-CoA = a (3E)-enoyl-CoA + H2O. The enzyme catalyses a (3S)-3-hydroxyacyl-CoA + NAD(+) = a 3-oxoacyl-CoA + NADH + H(+). It carries out the reaction (3S)-3-hydroxybutanoyl-CoA = (3R)-3-hydroxybutanoyl-CoA. The protein operates within lipid metabolism; fatty acid beta-oxidation. In terms of biological role, catalyzes the formation of a hydroxyacyl-CoA by addition of water on enoyl-CoA. Also exhibits 3-hydroxyacyl-CoA epimerase and 3-hydroxyacyl-CoA dehydrogenase activities. This Shewanella baltica (strain OS185) protein is Fatty acid oxidation complex subunit alpha.